A 95-amino-acid chain; its full sequence is Protein TusB (95 aa).

This sequence belongs to the DsrH/TusB family. In terms of assembly, heterohexamer, formed by a dimer of trimers. The hexameric TusBCD complex contains 2 copies each of TusB, TusC and TusD. The TusBCD complex interacts with TusE.

The protein resides in the cytoplasm. Functionally, part of a sulfur-relay system required for 2-thiolation of 5-methylaminomethyl-2-thiouridine (mnm(5)s(2)U) at tRNA wobble positions. This is Protein TusB from Escherichia coli (strain K12 / MC4100 / BW2952).